The chain runs to 260 residues: DNA repair protein RecO (260 aa).

Belongs to the RecO family.

In terms of biological role, involved in DNA repair and RecF pathway recombination. This chain is DNA repair protein RecO, found in Chlorobaculum parvum (strain DSM 263 / NCIMB 8327) (Chlorobium vibrioforme subsp. thiosulfatophilum).